We begin with the raw amino-acid sequence, 157 residues long: Myosin regulatory light chain, striated adductor muscle (157 aa).

2 EF-hand domains span residues 16-51 and 85-120; these read KQIQ…LGRA and DSEE…MGDN. Residues Asp29, Asp31, Asp33, and Asp40 each contribute to the Ca(2+) site.

In terms of biological role, in molluscan muscle, calcium regulation is associated with myosin rather than with actin. Muscle myosin contains two types of light chains: the catalytic light chain, essential for ATPase activity, and the regulatory light chain, a calcium-binding protein responsible for Ca(2+) dependent binding and Ca(2+) dependent Mg-ATPase activity. This chain is Myosin regulatory light chain, striated adductor muscle, found in Argopecten irradians (Bay scallop).